The primary structure comprises 469 residues: 6-phosphogluconate dehydrogenase, NADP(+)-dependent, decarboxylating (469 aa).

NADP(+)-binding positions include 10 to 15, 33 to 35, 74 to 76, and asparagine 102; these read GLAVMG, NRS, and VKA. Residues asparagine 102 and 128 to 130 contribute to the substrate site; that span reads SGG. The active-site Proton acceptor is lysine 182. Substrate is bound at residue 185 to 186; it reads HN. The Proton donor role is filled by glutamate 189. Tyrosine 190, lysine 260, arginine 287, arginine 446, and histidine 452 together coordinate substrate.

The protein belongs to the 6-phosphogluconate dehydrogenase family. In terms of assembly, homodimer.

The enzyme catalyses 6-phospho-D-gluconate + NADP(+) = D-ribulose 5-phosphate + CO2 + NADPH. It functions in the pathway carbohydrate degradation; pentose phosphate pathway; D-ribulose 5-phosphate from D-glucose 6-phosphate (oxidative stage): step 3/3. In terms of biological role, catalyzes the oxidative decarboxylation of 6-phosphogluconate to ribulose 5-phosphate and CO(2), with concomitant reduction of NADP to NADPH. Is the predominant 6-P-gluconate dehydrogenase isoenzyme in B.subtilis during growth on glucose and gluconate. This is 6-phosphogluconate dehydrogenase, NADP(+)-dependent, decarboxylating (gndA) from Bacillus subtilis (strain 168).